Here is a 226-residue protein sequence, read N- to C-terminus: UPF0758 protein Daro_3142 (226 aa).

Residues 103-226 enclose the MPN domain; the sequence is SFTSPGKVRD…PLSFAERGLL (124 aa). Zn(2+)-binding residues include histidine 174, histidine 176, and aspartate 187. Residues 174 to 187 carry the JAMM motif motif; sequence HNHPSGIAEPSRAD.

This sequence belongs to the UPF0758 family.

The sequence is that of UPF0758 protein Daro_3142 from Dechloromonas aromatica (strain RCB).